A 349-amino-acid chain; its full sequence is Aspartate carbamoyltransferase catalytic subunit (349 aa).

Carbamoyl phosphate is bound by residues arginine 59 and threonine 60. Position 87 (lysine 87) interacts with L-aspartate. 3 residues coordinate carbamoyl phosphate: arginine 109, histidine 142, and glutamine 145. Arginine 182 and arginine 253 together coordinate L-aspartate. Residues glycine 294 and proline 295 each contribute to the carbamoyl phosphate site.

It belongs to the aspartate/ornithine carbamoyltransferase superfamily. ATCase family. As to quaternary structure, heterododecamer (2C3:3R2) of six catalytic PyrB chains organized as two trimers (C3), and six regulatory PyrI chains organized as three dimers (R2).

The enzyme catalyses carbamoyl phosphate + L-aspartate = N-carbamoyl-L-aspartate + phosphate + H(+). It functions in the pathway pyrimidine metabolism; UMP biosynthesis via de novo pathway; (S)-dihydroorotate from bicarbonate: step 2/3. Its function is as follows. Catalyzes the condensation of carbamoyl phosphate and aspartate to form carbamoyl aspartate and inorganic phosphate, the committed step in the de novo pyrimidine nucleotide biosynthesis pathway. The polypeptide is Aspartate carbamoyltransferase catalytic subunit (Synechococcus sp. (strain CC9311)).